We begin with the raw amino-acid sequence, 78 residues long: Small ribosomal subunit protein bS18 (78 aa).

It belongs to the bacterial ribosomal protein bS18 family. Part of the 30S ribosomal subunit. Forms a tight heterodimer with protein bS6.

In terms of biological role, binds as a heterodimer with protein bS6 to the central domain of the 16S rRNA, where it helps stabilize the platform of the 30S subunit. The polypeptide is Small ribosomal subunit protein bS18 (Lactobacillus delbrueckii subsp. bulgaricus (strain ATCC BAA-365 / Lb-18)).